The primary structure comprises 305 residues: Dermonecrotic toxin LiSicTox-alphaII1 (305 aa).

The N-terminal stretch at 1 to 18 is a signal peptide; it reads MLLHIALILGCWSVFSEG. Residues 19 to 26 constitute a propeptide that is removed on maturation; it reads AETDVAER. Residue histidine 38 is part of the active site. Residues glutamate 58 and aspartate 60 each contribute to the Mg(2+) site. Histidine 74 serves as the catalytic Nucleophile. 2 disulfides stabilise this stretch: cysteine 78–cysteine 84 and cysteine 80–cysteine 223. Aspartate 118 is a Mg(2+) binding site.

The protein belongs to the arthropod phospholipase D family. Class II subfamily. Class IIa sub-subfamily. Requires Mg(2+) as cofactor. In terms of tissue distribution, expressed by the venom gland.

Its subcellular location is the secreted. The catalysed reaction is an N-(acyl)-sphingosylphosphocholine = an N-(acyl)-sphingosyl-1,3-cyclic phosphate + choline. It carries out the reaction an N-(acyl)-sphingosylphosphoethanolamine = an N-(acyl)-sphingosyl-1,3-cyclic phosphate + ethanolamine. It catalyses the reaction a 1-acyl-sn-glycero-3-phosphocholine = a 1-acyl-sn-glycero-2,3-cyclic phosphate + choline. The enzyme catalyses a 1-acyl-sn-glycero-3-phosphoethanolamine = a 1-acyl-sn-glycero-2,3-cyclic phosphate + ethanolamine. Dermonecrotic toxins cleave the phosphodiester linkage between the phosphate and headgroup of certain phospholipids (sphingolipid and lysolipid substrates), forming an alcohol (often choline) and a cyclic phosphate. This toxin acts on sphingomyelin (SM) wih high activity. It may also act on ceramide phosphoethanolamine (CPE), lysophosphatidylcholine (LPC) and lysophosphatidylethanolamine (LPE), but not on lysophosphatidylserine (LPS), and lysophosphatidylglycerol (LPG). It acts by transphosphatidylation, releasing exclusively cyclic phosphate products as second products. Shows high hemolytic activity. Causes dermonecrosis, induces inflammatory response, platelet aggregation and increases vessel permeability. Shows no lethality when injected at higher dose into mice. May cause complement-dependent hemolysis as well as in a complement-independent manner. The hemolysis provoked in a complement-independent manner may be composed of several steps. The toxin may bind to erythrocyte membranes, may hydrolyze membrane phospholipids (SM and LPC) thus generating metabolism products that may cause hemolysis, probably by provoking an increase of calcium inside cells. The calcium influx may be due to the opening of L-type calcium channels, since L-type calcium channel blockers inhibit calcium influx. The polypeptide is Dermonecrotic toxin LiSicTox-alphaII1 (Loxosceles intermedia (Brown spider)).